We begin with the raw amino-acid sequence, 152 residues long: Transcriptional repressor NrdR (152 aa).

A zinc finger spans residues 3 to 33; that stretch reads CSICKKGETSVVDSRPTEDGTAIRRRRLCVC. One can recognise an ATP-cone domain in the interval 48–138; it reads IMVVKKNGRK…VYRNFREEKD (91 aa).

It belongs to the NrdR family. Requires Zn(2+) as cofactor.

In terms of biological role, negatively regulates transcription of bacterial ribonucleotide reductase nrd genes and operons by binding to NrdR-boxes. This is Transcriptional repressor NrdR from Pelagibacter ubique (strain HTCC1062).